A 79-amino-acid chain; its full sequence is Neurotoxin ShK-like1 (79 aa).

The signal sequence occupies residues 1–25; the sequence is MSRKLLAVLMVCTFFLIAASMGTNA. A propeptide spanning residues 26–35 is cleaved from the precursor; sequence LPFHEGIERR. The ShKT domain occupies 39–78; sequence CVDKMPFVCMRKDIPAICKNRNHRSYAFIMDVCRKTCGQC. Cystine bridges form between Cys-39–Cys-78, Cys-47–Cys-71, and Cys-56–Cys-75.

In terms of tissue distribution, expressed in nematocytes (in planulae and primary polyps). Is localized predominantly in the body column nematocytes and not in the tentacles (in primary polyps).

The protein localises to the nematocyst. It localises to the secreted. Neurotoxin. In vivo, induces contraction paralysis followed by death (within 2 hours) on zebrafish larvae. Also induces body contraction in Nematostella 11-dpf polyps. This chain is Neurotoxin ShK-like1, found in Nematostella vectensis (Starlet sea anemone).